The sequence spans 604 residues: Kelch-like protein 15 (604 aa).

A BTB domain is found at 31 to 98 (LDVTLVIEDH…MYYGTIELSM (68 aa)). The region spanning 133–237 (CAEIMRLLDD…TPTSVFEKVK (105 aa)) is the BACK domain. Kelch repeat units follow at residues 328–379 (FVFL…VIGK), 381–426 (IYAV…VLNN), 428–473 (LFIT…NKSK), 489–542 (KLYV…VLDK), and 544–590 (IMVL…VCNL).

In terms of assembly, homodimer. Dimerization does not affect PPP2R5B-binding, but is required for its proteasomal degradation. Interacts with CUL3. Directly interacts with PPP2R5B; this interaction leads to PPP2R5B proteasomal degradation. Interacts with RBBP8/CtIP; this interaction leads to RBBP8 proteasomal degradation. Interacts with PACMP micropeptide; interaction prevents ubiquitination and degradation of RBBP8/CtIP.

It is found in the nucleus. It functions in the pathway protein modification; protein ubiquitination. In terms of biological role, substrate-specific adapter for CUL3 E3 ubiquitin-protein ligase complex. Acts as an adapter for CUL3 to target the serine/threonine-protein phosphatase 2A (PP2A) subunit PPP2R5B for ubiquitination and subsequent proteasomal degradation, thus promoting exchange with other regulatory subunits. Acts as an adapter for CUL3 to target the DNA-end resection factor RBBP8/CtIP for ubiquitination and subsequent proteasomal degradation. Through the regulation of RBBP8/CtIP protein turnover, plays a key role in DNA damage response, favoring DNA double-strand repair through error-prone non-homologous end joining (NHEJ) over error-free, RBBP8-mediated homologous recombination (HR). This is Kelch-like protein 15 (KLHL15) from Homo sapiens (Human).